Reading from the N-terminus, the 1430-residue chain is Bromodomain-containing protein homolog (1430 aa).

Residues 23-49 (FACPVRGCDRSYKTIMGLQYHLMKYDH) form a C2H2-type zinc finger. Residues 51 to 111 (NPQPLTPVLT…AGGGSASGVS (61 aa)) are disordered. The segment covering 62–81 (SRKKARSRSGGHHSTPRPHK) has biased composition (basic residues). The segment at 283–333 (DAVCCICLDGECQNTNVILFCDMCNLAVHQDCYGVPYIPEGQWLCRRCLQS) adopts a PHD-type 1 zinc-finger fold. Residues Cys-286, Cys-289, Cys-303, Cys-306, His-311, Cys-314, Cys-327, and Cys-330 each contribute to the Zn(2+) site. A C2HC pre-PHD-type zinc finger spans residues 337-370 (PVNCVLCPNAGGAFKQTDHGQWAHVVCALWIPEV). Residues 394–457 (LTCYVCKEKG…QKFAYCHAHT (64 aa)) form a PHD-type 2 zinc finger. Residues 611–715 (LQLNPLEAAL…DQAAPLFVQV (105 aa)) form the Bromo domain. Residues 796–805 (KARFAARHSS) are compositionally biased toward basic residues. 4 disordered regions span residues 796-887 (KARF…SSPV), 901-942 (AQAA…TTAA), 1012-1054 (ANLP…QALP), and 1076-1301 (QRDV…GQKP). The segment covering 842-857 (HDDDDEEEDSDEDSMG) has biased composition (acidic residues). Over residues 865–887 (LLNSTQTPPCSPIKSLNNSSSPV) the composition is skewed to polar residues. Composition is skewed to low complexity over residues 922-942 (NSQS…TTAA), 1034-1043 (SSSMSPKKSP), and 1085-1107 (APSQ…SCSD). Positions 1108–1120 (FDSDEASEGDADG) are enriched in acidic residues. The segment covering 1121 to 1137 (DPDRDGGRSRSEERDST) has biased composition (basic and acidic residues). Polar residues-rich tracts occupy residues 1151 to 1165 (ASLN…NMAI) and 1265 to 1278 (NTTA…TNNN). Residues 1281-1293 (KHSEDSASSERHN) are compositionally biased toward basic and acidic residues. The region spanning 1305-1378 (PLQLVWAKCR…TWQWLPANKL (74 aa)) is the PWWP domain.

As to quaternary structure, component of the Enok complex composed of at least Br140, enok, Eaf6 and Ing5. As part of the Enok complex, interacts with elg1 and the Elg1 RFC-like complex.

It is found in the nucleus. Its function is as follows. Scaffold subunit of the histone acetyltransferase (HAT) Enok complex which has histone H3 acetyltransferase activity. As part of the Enok complex, associates with the Elg1 RFC-like complex and down-regulates its PCNA-unloading function to promote the G1/S transition. May also play a role in maintaining the protein levels and stability of enok. The chain is Bromodomain-containing protein homolog from Drosophila melanogaster (Fruit fly).